The primary structure comprises 429 residues: Argininosuccinate lyase (429 aa).

It belongs to the lyase 1 family. Argininosuccinate lyase subfamily.

Its subcellular location is the cytoplasm. The enzyme catalyses 2-(N(omega)-L-arginino)succinate = fumarate + L-arginine. It functions in the pathway amino-acid biosynthesis; L-arginine biosynthesis; L-arginine from L-ornithine and carbamoyl phosphate: step 3/3. The sequence is that of Argininosuccinate lyase from Pyrobaculum neutrophilum (strain DSM 2338 / JCM 9278 / NBRC 100436 / V24Sta) (Thermoproteus neutrophilus).